We begin with the raw amino-acid sequence, 156 residues long: 6,7-dimethyl-8-ribityllumazine synthase (156 aa).

5-amino-6-(D-ribitylamino)uracil contacts are provided by residues Phe-22, 57-59 (AVE), and 81-83 (SVI). Residue 86-87 (GT) coordinates (2S)-2-hydroxy-3-oxobutyl phosphate. The Proton donor role is filled by His-89. 5-amino-6-(D-ribitylamino)uracil is bound at residue Phe-114. Arg-128 is a binding site for (2S)-2-hydroxy-3-oxobutyl phosphate.

It belongs to the DMRL synthase family. Forms an icosahedral capsid composed of 60 subunits, arranged as a dodecamer of pentamers.

It catalyses the reaction (2S)-2-hydroxy-3-oxobutyl phosphate + 5-amino-6-(D-ribitylamino)uracil = 6,7-dimethyl-8-(1-D-ribityl)lumazine + phosphate + 2 H2O + H(+). Its pathway is cofactor biosynthesis; riboflavin biosynthesis; riboflavin from 2-hydroxy-3-oxobutyl phosphate and 5-amino-6-(D-ribitylamino)uracil: step 1/2. In terms of biological role, catalyzes the formation of 6,7-dimethyl-8-ribityllumazine by condensation of 5-amino-6-(D-ribitylamino)uracil with 3,4-dihydroxy-2-butanone 4-phosphate. This is the penultimate step in the biosynthesis of riboflavin. This chain is 6,7-dimethyl-8-ribityllumazine synthase, found in Vibrio vulnificus (strain CMCP6).